Here is a 470-residue protein sequence, read N- to C-terminus: MESIVYETQPLLRGMVVGTIMLLCYRYGLALSILQLYLNFMYRITNEKGKPLRGPEFSWPDGQTVEKFLQGGQKSFSWQAYGPLYRIWTVFRPEVVITRPEDVKAFFFDSHTHQKAASSNAGWLFSQILGDCLGLINGERWSRVRHAFDPFFTRKISAQRLPHIMAAGEGYVNEVHQYDLGGKQAASTINLNAVDAFQRFPFFYVAEIIYGPLGITERVELWKLAETHTNIFRRLVQGGIHRYKATKFLSTSAYKETAHFVAAWRQFTLELAQKQLREGRTSPLTDLMAEVEDGKVTLNEVLHTIDESLFANLDVTTHVLTWAIVLLGNHPDVQELVRSEIKANTNDLETYMNRKDTLLHYSLLESLRVRPLLAFTIPESAQEDKVLSGYRVPKNIRYNLSTFGFGPRKCLGQHMAENMIKAILVPLLRQFRFKLLADQYKNGEYKVDKTNWVTLSDVNLEMERVPSGGS.

A helical transmembrane segment spans residues 12-34; it reads LRGMVVGTIMLLCYRYGLALSIL. Asparagine 399 is a glycosylation site (N-linked (GlcNAc...) asparagine). Position 410 (cysteine 410) interacts with heme.

It belongs to the cytochrome P450 family. Heme serves as cofactor.

Its subcellular location is the membrane. It participates in mycotoxin biosynthesis. Cytochrome P450 monooxygenase; part of the gene cluster that mediates the biosynthesis of sirodesmin PL, an epipolythiodioxopiperazine (ETP) characterized by a disulfide bridged cyclic dipeptide and that acts as a phytotoxin which is involved in the blackleg didease of canola. SirD catalyzes the O-prenylation of L-tyrosine (L-Tyr) in the presence of dimethylallyl diphosphate (DMAPP) to yield 4-O-dimethylallyl-L-Tyr, and therefore represents probably the first pathway-specific enzyme in the biosynthesis of sirodesmin PL. 4-O-dimethylallyl-L-Tyr, then undergoes condensation with L-Ser in a reaction catalyzed by the non-ribosomal peptide synthase sirP to form the diketopiperazine (DKP) backbone. Further bishydroxylation of the DKP performed by the cytochrome P450 monooxygenase sirC leads to the production of the intermediate phomamide. This step is essential to form the reactive thiol group required for toxicity of sirodesmin PL. The next steps of sirodesmin biosynthesis are not well understood yet, but some predictions could be made from intermediate compounds identification. Phomamide is converted into phomalizarine via oxidation, probably by sirT. Further oxidation, methylation (by sirM or sirN) and reduction steps convert phomalizarine to deacetyl sirodesmin. Finally, acetyltransferase sirH probably acetylates deacetyl sirodesmin to produce sirodesmin PL. This chain is Cytochrome P450 monooxygenase sirC, found in Leptosphaeria maculans (Blackleg fungus).